We begin with the raw amino-acid sequence, 1091 residues long: MCRDEPDTMILTQIEAKEACDWLRVTGFPQYAQLYEDLLFPIDIALVKREHDFLDRDAIEALCRRLNTLNKCAVMKLEISPHRKRSEDSDEEEPCAISGKWTFQRDSKRWSRLEEFDVFSPKQDPIPGSPDNSRLQSATSRESMLTDLSEHQEVSSIRSLSSTSSSAPTHVPHSGEATTPRTNSVISVCSSSHFVGNEDSFSSLPSPKELSSFSFSMKGHEKNTKSKTRSLLKRMESLKLKGSHHSKHKAPSKLGLIISAPILQEGMDEEKLKQLNCVEISALNGNHINVPMVRKRSVSNSTQTSSSSSQSETSSAVSTPSPVTRTRSLSTCNKRVGMYLEGFDPFSQSAFNNVTEQNYKNRESYPEDTVFYIPEDHKPGTFPKALSNGSFCPSGNSSVNWRTGSFHGPGHLSLRRENSSDSPKELKRRNSSSSVSSRMSIYDNVPGSILYSSSGELADLENEDIFPELDDILYHVKGMQRIVNQWSEKFSDEGDSDSALDSVSPCPSSPKQIHLDVDHDRRTPSDLDSTGNSLNEPEEPTDIPERRDSGVGASLTRCNRHRLRWHSFQSSHRPSLNSVSLQINCQSVAQMNLLQKYSLLKLTALLEKYTPSNKHGFSWAVPKFMKRIKVPDYKDRSVFGVPLTVNVQRSGQPLPQSIQQAMRYLRNHCLDQVGLFRKSGVKSRIQALRQMNESAEDYVNYEGQSAYDVADMLKQYFRDLPEPLMTNKLSETFLQIYQYVPKDQRLQAIKAAIMLLPDENREVLQTLLYFLSHVTAAVKENQMTPTNLAVCLAPSLFHLNTLKRENSSPRVMQRKQSLGKPDQKDLNENLAATQGLAHMIAECKKLFQVPEEMSRCRNSYTEQELKPLTLEALGHLSNDQPADYRHFLQDCVDGLFKEVKEKFKGWVSYPTSEQAELSYKKVSEGPPLRLWRATIEVPAAPEEILKRLLKEQHLWDVDLLDSKVIEILDSQTEIYQYVQNSMAPHPARDYVVLRTWRTNLPRGACALLFTSVDHDRAPVAGVRVNVLLSRYLIEPCGSGKSKLTYMCRADLRGHMPEWYTKSFGHLCAAEVVKIRDSFSNQSTESKDTRSR.

An SAM domain is found at 11–78 (LTQIEAKEAC…LNKCAVMKLE (68 aa)). Residues Ser-86, Ser-89, and Ser-129 each carry the phosphoserine modification. Disordered stretches follow at residues 120 to 181 (SPKQ…TTPR), 296 to 329 (RSVS…TRSL), 402 to 439 (RTGS…SSRM), and 491 to 552 (SDEG…SGVG). Over residues 130 to 143 (PDNSRLQSATSRES) the composition is skewed to polar residues. Composition is skewed to low complexity over residues 155–166 (SSIRSLSSTSSS) and 298–324 (VSNS…SPVT). Residues 274–447 (QLNCVEISAL…RMSIYDNVPG (174 aa)) are focal adhesion-targeting (FAT). Ser-321 carries the post-translational modification Phosphoserine. A compositionally biased stretch (basic and acidic residues) spans 414-425 (LRRENSSDSPKE). The segment covering 499-511 (ALDSVSPCPSSPK) has biased composition (polar residues). Positions 513 to 525 (IHLDVDHDRRTPS) are enriched in basic and acidic residues. The segment covering 526-535 (DLDSTGNSLN) has biased composition (polar residues). The interval 614-636 (KHGFSWAVPKFMKRIKVPDYKDR) is polybasic cluster (PBR). Residues 641–847 (VPLTVNVQRS…HMIAECKKLF (207 aa)) form the Rho-GAP domain. One can recognise an START domain in the interval 877 to 1084 (SNDQPADYRH…RDSFSNQSTE (208 aa)).

Interacts with EF1A1, facilitates EF1A1 distribution to the membrane periphery and ruffles upon growth factor stimulation and suppresses cell migration. Interacts with tensin TNS1 (via N-terminus); the interaction is decreased by phosphorylation of TNS1. Interacts with TNS3 and PTEN; in resting cells, interacts with TNS3 (via C2 tensin-type domain) but, following growth factor stimulation, TNS3 and PTEN are phosphorylated which leads to weakened interaction with TNS3 and enhanced interaction with PTEN. Interacts (via C-terminus) with tensin TNS4 (via SH2 domain); the interaction is independent of tyrosine phosphorylation of DLC1.

It localises to the cytoplasm. The protein resides in the cell junction. It is found in the focal adhesion. The protein localises to the membrane. Functionally, functions as a GTPase-activating protein for the small GTPases RHOA, RHOB, RHOC and CDC42, terminating their downstream signaling. This induces morphological changes and detachment through cytoskeletal reorganization, playing a critical role in biological processes such as cell migration and proliferation. Also functions in vivo as an activator of the phospholipase PLCD1. Active DLC1 increases cell migration velocity but reduces directionality. Required for growth factor-induced epithelial cell migration; in resting cells, interacts with TNS3 while PTEN interacts with the p85 regulatory subunit of the PI3K kinase complex but growth factor stimulation induces phosphorylation of TNS3 and PTEN, causing them to change their binding preference so that PTEN interacts with DLC1 and TNS3 interacts with p85. The PTEN-DLC1 complex translocates to the posterior of migrating cells to activate RHOA while the TNS3-p85 complex translocates to the leading edge of migrating cells to promote RAC1 activation. This is Rho GTPase-activating protein 7 (Dlc1) from Rattus norvegicus (Rat).